A 333-amino-acid polypeptide reads, in one-letter code: Ribosome biogenesis regulatory protein homolog (333 aa).

Disordered regions lie at residues 227 to 248 (KANV…VSGE) and 271 to 333 (AAAV…ARKG). A compositionally biased stretch (basic and acidic residues) spans 278–295 (LREKKEKSERKGAKDQTR). The segment covering 324–333 (GANKAKARKG) has biased composition (basic residues).

The protein belongs to the RRS1 family.

The protein resides in the nucleus. Its subcellular location is the nucleolus. Involved in ribosomal large subunit assembly. The protein is Ribosome biogenesis regulatory protein homolog of Caenorhabditis elegans.